The primary structure comprises 469 residues: Cyclin-dependent kinase 14 (469 aa).

Phosphoserine is present on residues Ser-24, Ser-78, and Ser-95. Residues 103–133 (FKSSSAGKESPKVRRHSSPSSPTSPKFGKAD) are disordered. Phosphoserine is present on Ser-134. Residues 135–419 (YEKLEKLGEG…AQAALSHEYF (285 aa)) form the Protein kinase domain. Residues 141-149 (LGEGSYATV) and Lys-164 contribute to the ATP site. Asp-256 acts as the Proton acceptor in catalysis. The tract at residues 449-469 (ESMRAFGKNNSYGKSLSNSKH) is disordered. Residues 456–469 (KNNSYGKSLSNSKH) are compositionally biased toward polar residues.

The protein belongs to the protein kinase superfamily. CMGC Ser/Thr protein kinase family. CDC2/CDKX subfamily. In terms of assembly, found in a complex with LRP6, CCNY and CAPRIN2 during G2/M stage; CAPRIN2 functions as a scaffold for the complex by binding to CCNY via its N terminus and to CDK14 via its C terminus. Interacts with CCNY; CCNY mediates its recruitment to the plasma membrane and promotes phosphorylation of LRP6. Interacts with CCDN3 and CDKN1A. Interacts with SEPT8. Interacts with 14-3-3 proteina YWHAB, YWHAE, YWHAH and YWHAQ. As to expression, in the adult, widely expressed at low levels except in brain, kidney and testis where expression is high. In the brain, detected in cortex, hippocampus, dentate gyrus, amygdala cortex, parasubiculum and cerebellum. In the embryo, expressed predominantly in the nervous system.

It is found in the cell membrane. Its subcellular location is the cytoplasm. The protein resides in the nucleus. It catalyses the reaction L-seryl-[protein] + ATP = O-phospho-L-seryl-[protein] + ADP + H(+). It carries out the reaction L-threonyl-[protein] + ATP = O-phospho-L-threonyl-[protein] + ADP + H(+). Its activity is regulated as follows. Serine/threonine-protein kinase activity is promoted by associated cyclins CCDN3 and CCNY and repressed by CDKN1A. Serine/threonine-protein kinase involved in the control of the eukaryotic cell cycle, whose activity is controlled by an associated cyclin. Acts as a cell-cycle regulator of Wnt signaling pathway during G2/M phase by mediating the phosphorylation of LRP6 at 'Ser-1490', leading to the activation of the Wnt signaling pathway. Acts as a regulator of cell cycle progression and cell proliferation via its interaction with CCDN3. Phosphorylates RB1 in vitro, however the relevance of such result remains to be confirmed in vivo. May also play a role in meiosis, neuron differentiation and may indirectly act as a negative regulator of insulin-responsive glucose transport. The protein is Cyclin-dependent kinase 14 (Cdk14) of Mus musculus (Mouse).